Here is a 187-residue protein sequence, read N- to C-terminus: Elongation factor P (187 aa).

It belongs to the elongation factor P family.

The protein resides in the cytoplasm. It participates in protein biosynthesis; polypeptide chain elongation. Its function is as follows. Involved in peptide bond synthesis. Stimulates efficient translation and peptide-bond synthesis on native or reconstituted 70S ribosomes in vitro. Probably functions indirectly by altering the affinity of the ribosome for aminoacyl-tRNA, thus increasing their reactivity as acceptors for peptidyl transferase. The protein is Elongation factor P of Desulfotalea psychrophila (strain LSv54 / DSM 12343).